Consider the following 1820-residue polypeptide: Cation channel sperm-associated targeting subunit tau (1820 aa).

The region spanning 87 to 222 is the C2 domain; the sequence is DSEELEITQE…QKGCFIEEVQ (136 aa). Disordered stretches follow at residues 360-383, 403-443, 695-722, and 838-857; these read SEET…ELEN, LLDN…TEVH, EVSM…SSME, and SSTK…SGSS. Over residues 415 to 443 the composition is skewed to polar residues; it reads PTLNQSDQDNSTADASKNDESTPSPTEVH.

Component of the CatSper complex or CatSpermasome composed of the core pore-forming members CATSPER1, CATSPER2, CATSPER3 and CATSPER4 as well as auxiliary members CATSPERB, CATSPERG, CATSPERD, CATSPERE, CATSPERZ, C2CD6/CATSPERT, TMEM249, TMEM262 and EFCAB9. HSPA1 may be an additional auxiliary complex member. The core complex members CATSPER1, CATSPER2, CATSPER3 and CATSPER4 form a heterotetrameric channel. The auxiliary CATSPERB, CATSPERG, CATSPERD and CATSPERE subunits form a pavilion-like structure over the pore which stabilizes the complex through interactions with CATSPER4, CATSPER3, CATSPER1 and CATSPER2 respectively. SLCO6C1 interacts with CATSPERE and TMEM262/CATSPERH interacts with CATSPERB, further stabilizing the complex. C2CD6/CATSPERT interacts at least with CATSPERD and is required for targeting the CatSper complex in the flagellar membrane. As to expression, expressed in testis (at protein level).

The protein resides in the cell projection. The protein localises to the cilium. It localises to the flagellum membrane. Auxiliary component of the CatSper complex, a complex involved in sperm cell hyperactivation. Sperm cell hyperactivation is needed for sperm motility which is essential late in the preparation of sperm for fertilization. Required for CatSper complex targeting and trafficking into the quadrilinear nanodomains. Targets the preassembled CatSper complexes to elongating flagella, where it links the channel-carrying vesicles and motor proteins. This is Cation channel sperm-associated targeting subunit tau from Homo sapiens (Human).